Here is a 332-residue protein sequence, read N- to C-terminus: Fructose-1,6-bisphosphatase class 1 (332 aa).

Glutamate 89, aspartate 110, leucine 112, and aspartate 113 together coordinate Mg(2+). Substrate contacts are provided by residues 113–116 (DGSS), asparagine 206, tyrosine 239, 257–259 (YLY), and lysine 269. A Mg(2+)-binding site is contributed by glutamate 275.

Belongs to the FBPase class 1 family. Homotetramer. It depends on Mg(2+) as a cofactor.

Its subcellular location is the cytoplasm. It catalyses the reaction beta-D-fructose 1,6-bisphosphate + H2O = beta-D-fructose 6-phosphate + phosphate. It participates in carbohydrate biosynthesis; gluconeogenesis. This chain is Fructose-1,6-bisphosphatase class 1, found in Enterobacter sp. (strain 638).